Reading from the N-terminus, the 462-residue chain is UDP-N-acetylmuramoylalanine--D-glutamate ligase (462 aa).

111–117 contacts ATP; the sequence is GTNGKTT.

Belongs to the MurCDEF family.

Its subcellular location is the cytoplasm. It carries out the reaction UDP-N-acetyl-alpha-D-muramoyl-L-alanine + D-glutamate + ATP = UDP-N-acetyl-alpha-D-muramoyl-L-alanyl-D-glutamate + ADP + phosphate + H(+). The protein operates within cell wall biogenesis; peptidoglycan biosynthesis. Its function is as follows. Cell wall formation. Catalyzes the addition of glutamate to the nucleotide precursor UDP-N-acetylmuramoyl-L-alanine (UMA). The sequence is that of UDP-N-acetylmuramoylalanine--D-glutamate ligase from Trichodesmium erythraeum (strain IMS101).